The chain runs to 831 residues: Intraflagellar transport protein 88 (831 aa).

TPR repeat units lie at residues 68–101 (IFKL…EQKV), 120–153 (TCIW…AEGA), 156–189 (AQIR…ASPS), 248–281 (FDPL…SILI), 492–525 (RGVH…DPYD), 526–559 (SFAH…NMES), 560–593 (VQAT…LPSY), 595–627 (DAIY…FSAV), 632–665 (PSIY…VPFS), 666–699 (LAVI…DTTT), and 700–733 (PKWS…FPTN). A disordered region spans residues 785 to 816 (RRNSVAAVGPGSRAGQDRFEASNNRVSSNTGD). Over residues 805-815 (ASNNRVSSNTG) the composition is skewed to polar residues.

The protein localises to the cell projection. The protein resides in the cilium. It localises to the flagellum. It is found in the cytoplasm. Its subcellular location is the cytoskeleton. The protein localises to the flagellum axoneme. The protein resides in the flagellum basal body. Functionally, component of the intraflagellar transport complex B (IFT-B) involved in flagellar assembly. This is Intraflagellar transport protein 88 from Giardia intestinalis (strain ATCC 50803 / WB clone C6) (Giardia lamblia).